The primary structure comprises 629 residues: 1-deoxy-D-xylulose-5-phosphate synthase (629 aa).

Residues histidine 72 and 113 to 115 (GHA) contribute to the thiamine diphosphate site. Aspartate 144 contributes to the Mg(2+) binding site. Residues 145–146 (GA), asparagine 174, tyrosine 287, and glutamate 370 contribute to the thiamine diphosphate site. A Mg(2+)-binding site is contributed by asparagine 174.

Belongs to the transketolase family. DXPS subfamily. As to quaternary structure, homodimer. Requires Mg(2+) as cofactor. Thiamine diphosphate serves as cofactor.

The catalysed reaction is D-glyceraldehyde 3-phosphate + pyruvate + H(+) = 1-deoxy-D-xylulose 5-phosphate + CO2. The protein operates within metabolic intermediate biosynthesis; 1-deoxy-D-xylulose 5-phosphate biosynthesis; 1-deoxy-D-xylulose 5-phosphate from D-glyceraldehyde 3-phosphate and pyruvate: step 1/1. Catalyzes the acyloin condensation reaction between C atoms 2 and 3 of pyruvate and glyceraldehyde 3-phosphate to yield 1-deoxy-D-xylulose-5-phosphate (DXP). This chain is 1-deoxy-D-xylulose-5-phosphate synthase, found in Prochlorococcus marinus (strain AS9601).